The following is a 357-amino-acid chain: Ribosomal RNA small subunit methyltransferase C (357 aa).

It belongs to the methyltransferase superfamily. RsmC family. As to quaternary structure, monomer.

The protein localises to the cytoplasm. The catalysed reaction is guanosine(1207) in 16S rRNA + S-adenosyl-L-methionine = N(2)-methylguanosine(1207) in 16S rRNA + S-adenosyl-L-homocysteine + H(+). In terms of biological role, specifically methylates the guanine in position 1207 of 16S rRNA in the 30S particle. This Colwellia psychrerythraea (strain 34H / ATCC BAA-681) (Vibrio psychroerythus) protein is Ribosomal RNA small subunit methyltransferase C.